A 339-amino-acid chain; its full sequence is DNA-directed RNA polymerase subunit alpha (339 aa).

The alpha N-terminal domain (alpha-NTD) stretch occupies residues 1-235 (MTIQKNWQEL…DQLNVFVNFE (235 aa)). The alpha C-terminal domain (alpha-CTD) stretch occupies residues 251-339 (FNPAFLKKVD…ELAKRFEDHY (89 aa)).

This sequence belongs to the RNA polymerase alpha chain family. Homodimer. The RNAP catalytic core consists of 2 alpha, 1 beta, 1 beta' and 1 omega subunit. When a sigma factor is associated with the core the holoenzyme is formed, which can initiate transcription.

The catalysed reaction is RNA(n) + a ribonucleoside 5'-triphosphate = RNA(n+1) + diphosphate. DNA-dependent RNA polymerase catalyzes the transcription of DNA into RNA using the four ribonucleoside triphosphates as substrates. This chain is DNA-directed RNA polymerase subunit alpha, found in Nitrobacter winogradskyi (strain ATCC 25391 / DSM 10237 / CIP 104748 / NCIMB 11846 / Nb-255).